The following is a 205-amino-acid chain: Large ribosomal subunit protein uL4 (205 aa).

Residues 43–60 (ARSGNRAQQTRAEVSAST) are compositionally biased toward polar residues. The disordered stretch occupies residues 43 to 96 (ARSGNRAQQTRAEVSASTHKPWRQKGTGRARSGRASSPIWRGGGVTFPNKPNEN). Over residues 62 to 74 (KPWRQKGTGRARS) the composition is skewed to basic residues.

The protein belongs to the universal ribosomal protein uL4 family. Part of the 50S ribosomal subunit.

Functionally, one of the primary rRNA binding proteins, this protein initially binds near the 5'-end of the 23S rRNA. It is important during the early stages of 50S assembly. It makes multiple contacts with different domains of the 23S rRNA in the assembled 50S subunit and ribosome. In terms of biological role, forms part of the polypeptide exit tunnel. The polypeptide is Large ribosomal subunit protein uL4 (Thiobacillus denitrificans (strain ATCC 25259 / T1)).